The chain runs to 714 residues: Fatty acid oxidation complex subunit alpha (714 aa).

The tract at residues 1-190 (MEMTSAFTLN…KLGLVDDVVP (190 aa)) is enoyl-CoA hydratase. The interval 306–714 (APLNSVGILG…FWKTTATDLQ (409 aa)) is 3-hydroxyacyl-CoA dehydrogenase.

The protein in the N-terminal section; belongs to the enoyl-CoA hydratase/isomerase family. In the central section; belongs to the 3-hydroxyacyl-CoA dehydrogenase family. In terms of assembly, heterotetramer of two alpha chains (FadJ) and two beta chains (FadI).

Its subcellular location is the cytoplasm. It catalyses the reaction a (3S)-3-hydroxyacyl-CoA = a (2E)-enoyl-CoA + H2O. The catalysed reaction is a 4-saturated-(3S)-3-hydroxyacyl-CoA = a (3E)-enoyl-CoA + H2O. It carries out the reaction a (3S)-3-hydroxyacyl-CoA + NAD(+) = a 3-oxoacyl-CoA + NADH + H(+). The enzyme catalyses (3S)-3-hydroxybutanoyl-CoA = (3R)-3-hydroxybutanoyl-CoA. It functions in the pathway lipid metabolism; fatty acid beta-oxidation. Catalyzes the formation of a hydroxyacyl-CoA by addition of water on enoyl-CoA. Also exhibits 3-hydroxyacyl-CoA epimerase and 3-hydroxyacyl-CoA dehydrogenase activities. The sequence is that of Fatty acid oxidation complex subunit alpha from Escherichia coli O8 (strain IAI1).